The following is a 715-amino-acid chain: Polyribonucleotide nucleotidyltransferase (715 aa).

2 residues coordinate Mg(2+): Asp493 and Asp499. The 60-residue stretch at Pro560 to Ile619 folds into the KH domain. Residues Gly629–Lys697 form the S1 motif domain.

It belongs to the polyribonucleotide nucleotidyltransferase family. Mg(2+) serves as cofactor.

The protein resides in the cytoplasm. The catalysed reaction is RNA(n+1) + phosphate = RNA(n) + a ribonucleoside 5'-diphosphate. Functionally, involved in mRNA degradation. Catalyzes the phosphorolysis of single-stranded polyribonucleotides processively in the 3'- to 5'-direction. The protein is Polyribonucleotide nucleotidyltransferase of Burkholderia multivorans (strain ATCC 17616 / 249).